We begin with the raw amino-acid sequence, 137 residues long: Small heat shock protein IbpA (137 aa).

Residues 28–137 enclose the sHSP domain; the sequence is TQSNGGYPPY…AMKPRRIEIK (110 aa).

This sequence belongs to the small heat shock protein (HSP20) family. As to quaternary structure, monomer. Forms homomultimers of about 100-150 subunits at optimal growth temperatures. Conformation changes to monomers at high temperatures or high ionic concentrations.

The protein localises to the cytoplasm. Associates with aggregated proteins, together with IbpB, to stabilize and protect them from irreversible denaturation and extensive proteolysis during heat shock and oxidative stress. Aggregated proteins bound to the IbpAB complex are more efficiently refolded and reactivated by the ATP-dependent chaperone systems ClpB and DnaK/DnaJ/GrpE. Its activity is ATP-independent. The sequence is that of Small heat shock protein IbpA from Pectobacterium atrosepticum (strain SCRI 1043 / ATCC BAA-672) (Erwinia carotovora subsp. atroseptica).